The sequence spans 611 residues: tRNA uridine 5-carboxymethylaminomethyl modification enzyme MnmG (611 aa).

12 to 17 contacts FAD; sequence GGGHSG. Position 271–285 (271–285) interacts with NAD(+); it reads GPRYCPSIEEKVYRF.

It belongs to the MnmG family. In terms of assembly, homodimer. Heterotetramer of two MnmE and two MnmG subunits. The cofactor is FAD.

It is found in the cytoplasm. Its function is as follows. NAD-binding protein involved in the addition of a carboxymethylaminomethyl (cmnm) group at the wobble position (U34) of certain tRNAs, forming tRNA-cmnm(5)s(2)U34. This is tRNA uridine 5-carboxymethylaminomethyl modification enzyme MnmG from Karelsulcia muelleri (strain GWSS) (Sulcia muelleri).